We begin with the raw amino-acid sequence, 199 residues long: ATP-dependent Clp protease proteolytic subunit 2 (199 aa).

The active-site Nucleophile is the Ser-98. His-123 is a catalytic residue.

The protein belongs to the peptidase S14 family. As to quaternary structure, fourteen ClpP subunits assemble into 2 heptameric rings which stack back to back to give a disk-like structure with a central cavity, resembling the structure of eukaryotic proteasomes.

Its subcellular location is the cytoplasm. It carries out the reaction Hydrolysis of proteins to small peptides in the presence of ATP and magnesium. alpha-casein is the usual test substrate. In the absence of ATP, only oligopeptides shorter than five residues are hydrolyzed (such as succinyl-Leu-Tyr-|-NHMec, and Leu-Tyr-Leu-|-Tyr-Trp, in which cleavage of the -Tyr-|-Leu- and -Tyr-|-Trp bonds also occurs).. In terms of biological role, cleaves peptides in various proteins in a process that requires ATP hydrolysis. Has a chymotrypsin-like activity. Plays a major role in the degradation of misfolded proteins. This chain is ATP-dependent Clp protease proteolytic subunit 2, found in Treponema pallidum (strain Nichols).